Reading from the N-terminus, the 477-residue chain is Aspartyl/glutamyl-tRNA(Asn/Gln) amidotransferase subunit B (477 aa).

It belongs to the GatB/GatE family. GatB subfamily. In terms of assembly, heterotrimer of A, B and C subunits.

It carries out the reaction L-glutamyl-tRNA(Gln) + L-glutamine + ATP + H2O = L-glutaminyl-tRNA(Gln) + L-glutamate + ADP + phosphate + H(+). The catalysed reaction is L-aspartyl-tRNA(Asn) + L-glutamine + ATP + H2O = L-asparaginyl-tRNA(Asn) + L-glutamate + ADP + phosphate + 2 H(+). Functionally, allows the formation of correctly charged Asn-tRNA(Asn) or Gln-tRNA(Gln) through the transamidation of misacylated Asp-tRNA(Asn) or Glu-tRNA(Gln) in organisms which lack either or both of asparaginyl-tRNA or glutaminyl-tRNA synthetases. The reaction takes place in the presence of glutamine and ATP through an activated phospho-Asp-tRNA(Asn) or phospho-Glu-tRNA(Gln). The polypeptide is Aspartyl/glutamyl-tRNA(Asn/Gln) amidotransferase subunit B (Legionella pneumophila (strain Corby)).